Reading from the N-terminus, the 87-residue chain is Small ribosomal subunit protein uS15 (87 aa).

This sequence belongs to the universal ribosomal protein uS15 family. In terms of assembly, part of the 30S ribosomal subunit. Forms a bridge to the 50S subunit in the 70S ribosome, contacting the 23S rRNA.

Its function is as follows. One of the primary rRNA binding proteins, it binds directly to 16S rRNA where it helps nucleate assembly of the platform of the 30S subunit by binding and bridging several RNA helices of the 16S rRNA. In terms of biological role, forms an intersubunit bridge (bridge B4) with the 23S rRNA of the 50S subunit in the ribosome. The polypeptide is Small ribosomal subunit protein uS15 (Ruminiclostridium cellulolyticum (strain ATCC 35319 / DSM 5812 / JCM 6584 / H10) (Clostridium cellulolyticum)).